A 334-amino-acid polypeptide reads, in one-letter code: Deoxyhypusine synthase (334 aa).

NAD(+)-binding positions include 73-77 (SNIIS), 99-101 (TGG), glutamate 105, and aspartate 207. A spermidine-binding site is contributed by 104–105 (EE). Spermidine contacts are provided by aspartate 212 and histidine 256. 276–277 (NA) contacts NAD(+). Spermidine-binding positions include 282–284 (GSD) and 291–297 (EAVSWGK). Lysine 297 serves as the catalytic Nucleophile. NAD(+) is bound at residue 310–311 (DA).

The protein belongs to the deoxyhypusine synthase family. NAD(+) serves as cofactor.

The enzyme catalyses [eIF5A protein]-L-lysine + spermidine = [eIF5A protein]-deoxyhypusine + propane-1,3-diamine. It participates in protein modification; eIF5A hypusination. Catalyzes the NAD-dependent oxidative cleavage of spermidine and the subsequent transfer of the butylamine moiety of spermidine to the epsilon-amino group of a specific lysine residue of the eIF-5A precursor protein to form the intermediate deoxyhypusine residue. In Encephalitozoon cuniculi (strain GB-M1) (Microsporidian parasite), this protein is Deoxyhypusine synthase (DYS1).